The primary structure comprises 70 residues: Conotoxin Lt11.2 (70 aa).

The first 26 residues, M1 to A26, serve as a signal peptide directing secretion. 4 disulfides stabilise this stretch: C27-C41, C34-C46, C40-C50, and C45-C54. P57 is subject to Proline amide. Positions E61–R70 are excised as a propeptide.

The protein belongs to the conotoxin I2 superfamily. As to expression, expressed by the venom duct.

The protein localises to the secreted. This is Conotoxin Lt11.2 from Conus litteratus (Lettered cone).